Here is an 88-residue protein sequence, read N- to C-terminus: FXYD domain-containing ion transport regulator 4 (88 aa).

Residues M1 to A20 form the signal peptide. Residues S21–Q38 are Extracellular-facing. Residues L39 to G59 form a helical membrane-spanning segment. At K60 to C88 the chain is on the cytoplasmic side.

It belongs to the FXYD family. As to quaternary structure, regulatory subunit of the sodium/potassium-transporting ATPase which is composed of a catalytic alpha subunit, a non-catalytic beta subunit and a regulatory subunit. The regulatory subunit, a member of the FXYD protein family, modulates the enzymatic activity in a tissue- and isoform-specific way by changing affinities of the Na+/K+-ATPase toward Na(+), K(+) or ATP.

Its subcellular location is the cell membrane. The protein resides in the basolateral cell membrane. Its function is as follows. Associates with and regulates the activity of the sodium/potassium-transporting ATPase (NKA) which catalyzes the hydrolysis of ATP coupled with the exchange of Na(+) and K(+) ions across the plasma membrane. Increases the apparent affinity of the transporter for Na(+) and increases NKA activity. This is FXYD domain-containing ion transport regulator 4 (Fxyd4) from Mus musculus (Mouse).